The sequence spans 562 residues: Eukaryotic translation initiation factor 3 subunit L (562 aa).

The tract at residues 1 to 29 (MSHAKEDYDSSYDPYSYQADYDGHTGDPK) is disordered. A compositionally biased stretch (low complexity) spans 11 to 20 (SYDPYSYQAD). The region spanning 329-535 (DSIRVFANIL…IHIADTKVAR (207 aa)) is the PCI domain.

Belongs to the eIF-3 subunit L family. Component of the eukaryotic translation initiation factor 3 (eIF-3) complex, which is composed of 13 subunits: eif3a, eif3b, eif3c, eif3d, eif3e, eif3f, eif3g, eif3h, eif3i, eif3j, eif3k, eif3l and eif3m.

The protein localises to the cytoplasm. Functionally, component of the eukaryotic translation initiation factor 3 (eIF-3) complex, which is involved in protein synthesis of a specialized repertoire of mRNAs and, together with other initiation factors, stimulates binding of mRNA and methionyl-tRNAi to the 40S ribosome. The eIF-3 complex specifically targets and initiates translation of a subset of mRNAs involved in cell proliferation. The sequence is that of Eukaryotic translation initiation factor 3 subunit L (eif3l) from Xenopus laevis (African clawed frog).